Consider the following 257-residue polypeptide: Outer membrane protein Omp26La (257 aa).

An N-terminal signal peptide occupies residues 1–19 (MKKIALFITASLIAGNTLA).

Belongs to the MipA/OmpV family.

It is found in the cell outer membrane. In Vibrio anguillarum (Listonella anguillarum), this protein is Outer membrane protein Omp26La.